We begin with the raw amino-acid sequence, 440 residues long: Endoplasmic reticulum junction formation protein lunapark (440 aa).

Residues 1-45 are Cytoplasmic-facing; it reads MGALLAKWRAKPSTVEVLEKMEKDIQSLEEFRDKNQKLRKIWVAR. Residues 16-40 adopt a coiled-coil conformation; that stretch reads EVLEKMEKDIQSLEEFRDKNQKLRK. The chain crosses the membrane as a helical span at residues 46-66; the sequence is LFFYSTILYILTSLTVYLWYL. At 67 to 77 the chain is on the lumenal side; that stretch reads PGGMTARLLTT. A helical membrane pass occupies residues 78–98; the sequence is LLFLLFPVLIWFVRTLLILWF. Topologically, residues 99–440 are cytoplasmic; sequence SRRTERNNDA…ESEESFMETE (342 aa). A coiled-coil region spans residues 100–128; the sequence is RRTERNNDALELLKAEKKKILEEVMEKET. Residues 149–169 form a disordered region; the sequence is LELPVPGPPITPRPGQDLRQR. Thr159 bears the Phosphothreonine mark. 4 positions are modified to phosphoserine: Ser177, Ser179, Ser188, and Ser192. Thr198 is modified (phosphothreonine). The disordered stretch occupies residues 202 to 247; the sequence is QRDTSAPGGPPERSVQPTPQSNILQRRPGSPATAVSGMALHPPGPP. 2 positions are modified to phosphoserine: Ser206 and Ser215. A compositionally biased stretch (polar residues) spans 216 to 225; that stretch reads VQPTPQSNIL. Thr219 carries the post-translational modification Phosphothreonine. Phosphoserine occurs at positions 222 and 231. Residues 280-305 form a C4-type; plays a role in ER morphology zinc finger; that stretch reads CQQCFSHNGMALKEEFEYVAFRCAYC. Residues 316-440 are disordered; it reads PQAPRLQEIS…ESEESFMETE (125 aa). Ser325 carries the phosphoserine modification. Polar residues predominate over residues 334–343; that stretch reads DSQGSVNTLQ. 2 stretches are compositionally biased toward acidic residues: residues 370–411 and 431–440; these read QAIE…DDTE and ESEESFMETE.

The protein belongs to the lunapark family. As to quaternary structure, homodimer; homodimerization requires the C4-type zinc finger motif and decreases during mitosis in a phosphorylation-dependent manner. Phosphorylated. Phosphorylation at Thr-159 and Ser-325 occurs during interphase. Phosphorylation at Ser-177, Ser-179, Ser-188, Ser-192, Thr-198, Ser-206, Ser-215, Thr-219, Ser-222 and Ser-231 occurs during mitosis; these phosphorylations reduce both its homodimerization and the ER three-way tubular junction formation.

The protein localises to the endoplasmic reticulum membrane. Functionally, endoplasmic reticulum (ER)-shaping membrane protein that plays a role in determining ER morphology. Involved in the stabilization of nascent three-way ER tubular junctions within the ER network. May also play a role as a curvature-stabilizing protein within three-way ER tubular junction network. This Xenopus laevis (African clawed frog) protein is Endoplasmic reticulum junction formation protein lunapark (lnpk).